Consider the following 594-residue polypeptide: Metastasis-associated protein MTA3 (594 aa).

The region spanning 1–147 is the BAH domain; that stretch reads MAANMYRVGD…PSLKTLLADK (147 aa). Positions 148–259 constitute an ELM2 domain; that stretch reads GEIRVGPRYQ…SAISVLVPLG (112 aa). The SANT domain occupies 266 to 318; the sequence is DEMEEWSASEASLFEEALEKYGKDFNDIRQDFLPWKSLTSIIEYYYMWKTTDR. The GATA-type; atypical zinc finger occupies 379 to 406; the sequence is CESCYATQSHQWYSWGPPNMQCRLCAIC. Ser428 and Ser430 each carry phosphoserine. Thr455 carries the post-translational modification Phosphothreonine. At Ser519 the chain carries Phosphoserine.

Belongs to the metastasis-associated protein family. Component of the nucleosome remodeling and deacetylase (NuRD) repressor complex, composed of core proteins MTA1, MTA2, MTA3, RBBP4, RBBP7, HDAC1, HDAC2, MBD2, MBD3, and peripherally associated proteins CDK2AP1, CDK2AP2, GATAD2A, GATAD2B, CHD3, CHD4 and CHD5. The exact stoichiometry of the NuRD complex is unknown, and some subunits such as MBD2 and MBD3, GATAD2A and GATAD2B, and CHD3, CHD4 and CHD5 define mutually exclusive NuRD complexes. Interacts with BCL6. Interacts with NACC2. Interacts with PWWP2B. In terms of tissue distribution, expressed in germinal centers of lymphoid tissues. No expression in nonepithelial cells.

The protein resides in the nucleus. Its subcellular location is the cytoplasm. Its function is as follows. Acts as a component of the histone deacetylase NuRD complex which participates in the remodeling of chromatin. Plays a role in maintenance of the normal epithelial architecture through the repression of SNAI1 transcription in a histone deacetylase-dependent manner, and thus the regulation of E-cadherin levels. Contributes to transcriptional repression by BCL6. The polypeptide is Metastasis-associated protein MTA3 (MTA3) (Homo sapiens (Human)).